The sequence spans 511 residues: Putative polyol transporter 2 (511 aa).

12 helical membrane-spanning segments follow: residues Phe25–Gly45, Val63–Ala83, Tyr94–Thr114, Pro117–Ala137, Phe156–Ala176, Phe186–Pro206, Ile284–Val304, Leu324–Val344, Ala351–Leu371, Trp384–Ala404, Gly424–Leu444, and Gly454–Leu474.

The protein belongs to the major facilitator superfamily. Sugar transporter (TC 2.A.1.1) family.

It is found in the membrane. Functionally, plasma membrane sugar-proton symporter. The sequence is that of Putative polyol transporter 2 (PLT2) from Arabidopsis thaliana (Mouse-ear cress).